The following is a 398-amino-acid chain: Elongation factor Tu (398 aa).

Positions 10–207 (KPHVNIGTIG…TVDEYIPEPE (198 aa)) constitute a tr-type G domain. Residues 19–26 (GHVDHGKT) form a G1 region. 19 to 26 (GHVDHGKT) contacts GTP. Thr-26 serves as a coordination point for Mg(2+). Residues 63–67 (GITIN) form a G2 region. Positions 84–87 (DAPG) are G3. Residues 84–88 (DAPGH) and 139–142 (NKVD) contribute to the GTP site. The tract at residues 139-142 (NKVD) is G4. The segment at 177 to 179 (SAL) is G5.

It belongs to the TRAFAC class translation factor GTPase superfamily. Classic translation factor GTPase family. EF-Tu/EF-1A subfamily. As to quaternary structure, monomer.

It is found in the cytoplasm. The enzyme catalyses GTP + H2O = GDP + phosphate + H(+). Functionally, GTP hydrolase that promotes the GTP-dependent binding of aminoacyl-tRNA to the A-site of ribosomes during protein biosynthesis. This is Elongation factor Tu from Streptococcus pyogenes serotype M49 (strain NZ131).